The sequence spans 154 residues: 3-hydroxyacyl-[acyl-carrier-protein] dehydratase FabZ (154 aa).

H57 is an active-site residue.

Belongs to the thioester dehydratase family. FabZ subfamily.

It localises to the cytoplasm. It carries out the reaction a (3R)-hydroxyacyl-[ACP] = a (2E)-enoyl-[ACP] + H2O. Involved in unsaturated fatty acids biosynthesis. Catalyzes the dehydration of short chain beta-hydroxyacyl-ACPs and long chain saturated and unsaturated beta-hydroxyacyl-ACPs. This Allorhizobium ampelinum (strain ATCC BAA-846 / DSM 112012 / S4) (Agrobacterium vitis (strain S4)) protein is 3-hydroxyacyl-[acyl-carrier-protein] dehydratase FabZ.